The following is a 123-amino-acid chain: Ribosome-binding factor A (123 aa).

The protein belongs to the RbfA family. As to quaternary structure, monomer. Binds 30S ribosomal subunits, but not 50S ribosomal subunits or 70S ribosomes.

The protein resides in the cytoplasm. Its function is as follows. One of several proteins that assist in the late maturation steps of the functional core of the 30S ribosomal subunit. Associates with free 30S ribosomal subunits (but not with 30S subunits that are part of 70S ribosomes or polysomes). Required for efficient processing of 16S rRNA. May interact with the 5'-terminal helix region of 16S rRNA. This is Ribosome-binding factor A from Ralstonia pickettii (strain 12J).